The following is a 355-amino-acid chain: DNA polymerase IV (355 aa).

One can recognise a UmuC domain in the interval 4 to 185; it reads IIHVDMDCFY…LPLKKIPGVG (182 aa). Positions 8 and 103 each coordinate Mg(2+). Glutamate 104 is an active-site residue.

The protein belongs to the DNA polymerase type-Y family. Monomer. It depends on Mg(2+) as a cofactor.

It localises to the cytoplasm. The catalysed reaction is DNA(n) + a 2'-deoxyribonucleoside 5'-triphosphate = DNA(n+1) + diphosphate. In terms of biological role, poorly processive, error-prone DNA polymerase involved in untargeted mutagenesis. Copies undamaged DNA at stalled replication forks, which arise in vivo from mismatched or misaligned primer ends. These misaligned primers can be extended by PolIV. Exhibits no 3'-5' exonuclease (proofreading) activity. May be involved in translesional synthesis, in conjunction with the beta clamp from PolIII. In Pasteurella multocida (strain Pm70), this protein is DNA polymerase IV.